We begin with the raw amino-acid sequence, 695 residues long: NAD(P)H-quinone oxidoreductase subunit 5, chloroplastic (695 aa).

15 consecutive transmembrane segments (helical) span residues 1–21 (WIIPFIPLPVPILIGAGLILF), 32–52 (WAFQSVLLLSIVMIFSIYLSI), 81–101 (IDPLTSIMXXLITTVGIMVLI), 117–137 (FAYMSFFSTSMLGLVTSSNLI), 139–159 (IYIFWELVGLCSYLLIGFWFT), 177–197 (GDFGLLLGILGFYWITGSFEF), 211–231 (NEVNFLFVTLCAVLLFVGAVA), 250–270 (TPISALIHAATMVAAGIFLVA), 278–298 (VIPYIMYLISIIGIITVLLGA), 319–339 (LGYMMLALGMGSYRSALFHLI), 346–366 (ALLFLGSGSIIHSMETIVGYS), 388–408 (ITFLLGTLSLCGIPPLACFWS), 417–437 (WLYSPIFAIIAWATAGLTAFY), 535–555 (LFPIFVLGLFTLFVGSIGIPF), and 594–614 (VLSVSIAYFGIFIASFLYKPI).

It belongs to the complex I subunit 5 family. As to quaternary structure, NDH is composed of at least 16 different subunits, 5 of which are encoded in the nucleus.

Its subcellular location is the plastid. It is found in the chloroplast thylakoid membrane. The enzyme catalyses a plastoquinone + NADH + (n+1) H(+)(in) = a plastoquinol + NAD(+) + n H(+)(out). It catalyses the reaction a plastoquinone + NADPH + (n+1) H(+)(in) = a plastoquinol + NADP(+) + n H(+)(out). In terms of biological role, NDH shuttles electrons from NAD(P)H:plastoquinone, via FMN and iron-sulfur (Fe-S) centers, to quinones in the photosynthetic chain and possibly in a chloroplast respiratory chain. The immediate electron acceptor for the enzyme in this species is believed to be plastoquinone. Couples the redox reaction to proton translocation, and thus conserves the redox energy in a proton gradient. The polypeptide is NAD(P)H-quinone oxidoreductase subunit 5, chloroplastic (ndhF) (Capsicum baccatum (Peruvian pepper)).